We begin with the raw amino-acid sequence, 98 residues long: MPSISTNIILAFITALLGMLIFRSHLMSSLLCLEGMMLSMFILSTLTILSLHFTTSFMMPILLLVFAACEAAVGLALLVTVSNTYGLDYIQNLNLLQC.

Transmembrane regions (helical) follow at residues 2 to 22, 29 to 49, and 61 to 81; these read PSIS…MLIF, SLLC…LTIL, and ILLL…LVTV.

Belongs to the complex I subunit 4L family. Core subunit of respiratory chain NADH dehydrogenase (Complex I) which is composed of 45 different subunits.

It is found in the mitochondrion inner membrane. The enzyme catalyses a ubiquinone + NADH + 5 H(+)(in) = a ubiquinol + NAD(+) + 4 H(+)(out). Core subunit of the mitochondrial membrane respiratory chain NADH dehydrogenase (Complex I) which catalyzes electron transfer from NADH through the respiratory chain, using ubiquinone as an electron acceptor. Part of the enzyme membrane arm which is embedded in the lipid bilayer and involved in proton translocation. This is NADH-ubiquinone oxidoreductase chain 4L (MT-ND4L) from Lemur catta (Ring-tailed lemur).